The chain runs to 411 residues: SKA complex subunit 3 (411 aa).

Serine 34, serine 119, serine 138, serine 154, and serine 158 each carry phosphoserine. Residues 102 to 410 (YQARDKEDSG…GTRGAANKEN (309 aa)) are binds the NDC80 complex. A phosphothreonine mark is found at threonine 189 and threonine 216. Residues 195–410 (PSVQVLKTPR…GTRGAANKEN (216 aa)) form a binds microtubules and contacts the microtubule-binding domain of SKA1 region. Serine 289 carries the post-translational modification Phosphoserine. Threonine 297 bears the Phosphothreonine mark. Serine 324 and serine 352 each carry phosphoserine. Residues 349 to 410 (EPPSSAITSC…GTRGAANKEN (62 aa)) form a required for localization to kinetochores region. Threonine 363 carries the post-translational modification Phosphothreonine.

It belongs to the SKA3 family. Component of the SKA complex, composed of SKA1, SKA2 and SKA3. The SKA complex is a homodimer organized around a central W-shaped coiled-coil structure, formed by the interacting domains of SKA1, SKA2, and SKA3, each end of the 'W' is extended further by the C-terminal microtubule-binding domains of SKA1 and SKA3; the complex forms extended structures on microtubules. Interacts with the NDC80-NUF2 heterodimer of the NDC80 complex (via coiled coils); the interaction localizes the SKA complex to the kinetochore and is required to establish kinetochore-microtubule end-on attachments. Interacts with polo-like kinase PLK1.

The protein resides in the cytoplasm. Its subcellular location is the cytoskeleton. It is found in the spindle. It localises to the chromosome. The protein localises to the centromere. The protein resides in the kinetochore. Its subcellular location is the microtubule organizing center. It is found in the centrosome. Its function is as follows. Component of the SKA complex, a microtubule plus end-binding complex of the outer kinetochore that stabilizes spindle microtubule-kinetochore attachments, promotes alignment of chromosomes at the mitotic spindle equator (chromosome congression) and assists suppression of the spindle assembly checkpoint. Kinetochores, consisting of a centromere-associated inner segment and a microtubule-contacting outer segment, play a crucial role in chromosome segregation by mediating the physical connection between centromeric DNA and spindle microtubules. The outer kinetochore is made up of the ten-subunit KMN network complex, comprising the MIS12, NDC80 and KNL1 complexes, and auxiliary microtubule-associated components such as the SKA complex; together they connect the outer kinetochore with the inner kinetochore, bind microtubules, and mediate interactions with mitotic checkpoint proteins that delay anaphase until chromosomes are bioriented on the spindle. The SKA complex is loaded onto bioriented kinetochores and it facilitates chromosome congression by stabilizing microtubules together with MAPRE1, and end-on attachment of the NDC80 complex to depolymerizing spindle microtubules, thereby assisting the poleward-moving kinetochore in withstanding microtubule pulling forces. The complex associates with dynamic microtubule plus-ends and can track both depolymerizing and elongating microtubules. The complex recruits protein phosphatase 1 (PP1) to the kinetochore in prometaphase and metaphase, to oppose spindle assembly checkpoint signaling and promote the onset of anaphase. Within the complex, binds microtubules but with a much lower affinity than SKA1. Promotes stability of the polo-like kinase PLK1 protein. During meiosis the SKA complex stabilizes the meiotic spindle and is required for its migration to the cortex. The polypeptide is SKA complex subunit 3 (Ska3) (Mus musculus (Mouse)).